The following is a 793-amino-acid chain: DnaJ homolog subfamily C member 10 (793 aa).

An N-terminal signal peptide occupies residues 1–32; sequence MGVWLNKDDFIRDLKRISLCLLILYVVVVVGT. The region spanning 35–100 is the J domain; the sequence is NFYSLLGVSK…DLRKKYDKYG (66 aa). Residues 130–232 enclose the Thioredoxin 1 domain; the sequence is EIITLERREF…ESLVAFAMQH (103 aa). C158 and C161 form a disulfide bridge. Trxb regions lie at residues 235–350 and 348–463; these read STVT…LPDF and PDFE…PQNF. Thioredoxin domains follow at residues 454–553, 557–665, and 671–776; these read HVTT…IEDL, SVVS…SWGL, and ASID…ALIY. The cysteines at positions 480 and 483 are disulfide-linked. N530 carries an N-linked (GlcNAc...) asparagine glycan. 2 disulfide bridges follow: C588/C591 and C700/C703. The Prevents secretion from ER signature appears at 790-793; sequence KDEL.

As to quaternary structure, interacts with HSPA5 (via its J domain). Interacts with EDEM1. In terms of tissue distribution, ubiquitous. Particularly abundant in secretory tissues. Ubiquitous in fetal tissues and tumor tissues. Higher expression in fetal tissues than in adult tissues. Expressed in testis, pancreas, fetal thymus and fetal kidney. High expression in heart, liver, kidney, and testis. Low expression in spleen and skeletal muscle.

The protein localises to the endoplasmic reticulum lumen. In terms of biological role, endoplasmic reticulum disulfide reductase involved both in the correct folding of proteins and degradation of misfolded proteins. Required for efficient folding of proteins in the endoplasmic reticulum by catalyzing the removal of non-native disulfide bonds formed during the folding of proteins, such as LDLR. Also involved in endoplasmic reticulum-associated degradation (ERAD) by reducing incorrect disulfide bonds in misfolded glycoproteins recognized by EDEM1. Interaction with HSPA5 is required its activity, not for the disulfide reductase activity, but to facilitate the release of DNAJC10 from its substrate. Promotes apoptotic signaling pathway in response to endoplasmic reticulum stress. The sequence is that of DnaJ homolog subfamily C member 10 (Dnajc10) from Mus musculus (Mouse).